The following is a 385-amino-acid chain: Tyrosine--tRNA ligase 1, cytoplasmic (385 aa).

Residues 77–85 (PSGRMHIAQ) carry the 'HIGH' region motif. L-tyrosine contacts are provided by Tyr-200, Gln-204, Asp-207, and Gln-222. A 'KMSKS' region motif is present at residues 259-263 (KMSKS). Lys-262 is a binding site for ATP.

It belongs to the class-I aminoacyl-tRNA synthetase family.

Its subcellular location is the cytoplasm. The protein localises to the cytosol. The enzyme catalyses tRNA(Tyr) + L-tyrosine + ATP = L-tyrosyl-tRNA(Tyr) + AMP + diphosphate + H(+). Functionally, catalyzes the attachment of tyrosine to tRNA(Tyr) in a two-step reaction: tyrosine is first activated by ATP to form Tyr-AMP and then transferred to the acceptor end of tRNA(Tyr). This Arabidopsis thaliana (Mouse-ear cress) protein is Tyrosine--tRNA ligase 1, cytoplasmic.